Here is a 369-residue protein sequence, read N- to C-terminus: Cobalt-precorrin-5B C(1)-methyltransferase (369 aa).

It belongs to the CbiD family.

It carries out the reaction Co-precorrin-5B + S-adenosyl-L-methionine = Co-precorrin-6A + S-adenosyl-L-homocysteine. It participates in cofactor biosynthesis; adenosylcobalamin biosynthesis; cob(II)yrinate a,c-diamide from sirohydrochlorin (anaerobic route): step 6/10. Functionally, catalyzes the methylation of C-1 in cobalt-precorrin-5B to form cobalt-precorrin-6A. This Methanococcus vannielii (strain ATCC 35089 / DSM 1224 / JCM 13029 / OCM 148 / SB) protein is Cobalt-precorrin-5B C(1)-methyltransferase.